Here is a 344-residue protein sequence, read N- to C-terminus: tRNA dimethylallyltransferase (344 aa).

43 to 50 (GPTCCGKS) lines the ATP pocket. Substrate is bound at residue 45–50 (TCCGKS). The tract at residues 68-71 (DSMQ) is interaction with substrate tRNA.

Belongs to the IPP transferase family. As to quaternary structure, monomer. The cofactor is Mg(2+).

The catalysed reaction is adenosine(37) in tRNA + dimethylallyl diphosphate = N(6)-dimethylallyladenosine(37) in tRNA + diphosphate. In terms of biological role, catalyzes the transfer of a dimethylallyl group onto the adenine at position 37 in tRNAs that read codons beginning with uridine, leading to the formation of N6-(dimethylallyl)adenosine (i(6)A). The polypeptide is tRNA dimethylallyltransferase (Protochlamydia amoebophila (strain UWE25)).